A 218-amino-acid chain; its full sequence is ATP-dependent Clp protease proteolytic subunit 2 (218 aa).

The Nucleophile role is filled by S114. H139 is a catalytic residue.

Belongs to the peptidase S14 family. In terms of assembly, fourteen ClpP subunits assemble into 2 heptameric rings which stack back to back to give a disk-like structure with a central cavity, resembling the structure of eukaryotic proteasomes.

The protein resides in the cytoplasm. It carries out the reaction Hydrolysis of proteins to small peptides in the presence of ATP and magnesium. alpha-casein is the usual test substrate. In the absence of ATP, only oligopeptides shorter than five residues are hydrolyzed (such as succinyl-Leu-Tyr-|-NHMec, and Leu-Tyr-Leu-|-Tyr-Trp, in which cleavage of the -Tyr-|-Leu- and -Tyr-|-Trp bonds also occurs).. Cleaves peptides in various proteins in a process that requires ATP hydrolysis. Has a chymotrypsin-like activity. Plays a major role in the degradation of misfolded proteins. Probably partially responsible for degradation of ECF sigma factor SigR prime. The chain is ATP-dependent Clp protease proteolytic subunit 2 from Streptomyces coelicolor (strain ATCC BAA-471 / A3(2) / M145).